A 352-amino-acid chain; its full sequence is NAD(+)-dependent homoserine dehydrogenase (352 aa).

It belongs to the homoserine dehydrogenase family.

The catalysed reaction is L-homoserine + NAD(+) = L-aspartate 4-semialdehyde + NADH + H(+). In terms of biological role, dehydrogenase involved in the degradation of canavanine, the delta-oxa-analog of arginine, allowing growth on canavanine as sole nitrogen and carbon source. Catalyzes the conversion of homoserine and NAD(+) to aspartate-semialdehyde and NADH. Is highly specific for NAD(+) and cannot use NADP(+). This is NAD(+)-dependent homoserine dehydrogenase from Pseudomonas canavaninivorans.